The primary structure comprises 511 residues: Cytochrome P450 monooxygenase PUL2 (511 aa).

The chain crosses the membrane as a helical span at residues 14–34 (WMAFVYFTPVLFVVLYLLKEW). Residues N116, N141, and N442 are each glycosylated (N-linked (GlcNAc...) asparagine). Residue C462 participates in heme binding.

This sequence belongs to the cytochrome P450 family. It depends on heme as a cofactor.

Its subcellular location is the membrane. It functions in the pathway siderophore biosynthesis. In terms of biological role, cytochrome P450 monooxygenase; part of the PUL gene cluster that mediates the formation of pulcherrimin, a red iron-containing pigment composed of two cyclized and modified leucine molecules that acts as a siderophore, a chelator that binds iron outside the cell for subsequent uptake. Two leucine molecules are cyclized via a cyclodipeptide synthase, and the resulting diketopiperazine is oxidized by a cytochrome P450 monooxygenase to generate pulcherriminic acid (PA), which can then spontaneously bind iron to form pulcherrimin. The probable cyclodipeptide synthase PUL1 and the cytochrome P450 monooxygenase PUL2 encode the enzymes responsible for the two-step pulcherrimin biosynthesis pathway. The protein is Cytochrome P450 monooxygenase PUL2 of Kluyveromyces lactis (strain ATCC 8585 / CBS 2359 / DSM 70799 / NBRC 1267 / NRRL Y-1140 / WM37) (Yeast).